The chain runs to 473 residues: Inactive pancreatic lipase-related protein 1 (473 aa).

The first 17 residues, methionine 1–glycine 17, serve as a signal peptide directing secretion. 2 cysteine pairs are disulfide-bonded: cysteine 21–cysteine 27 and cysteine 109–cysteine 120. Residue serine 171 is the Nucleophile of the active site. Aspartate 194 (charge relay system) is an active-site residue. Ca(2+) contacts are provided by glutamate 205, arginine 208, aspartate 210, and aspartate 213. A disulfide bridge links cysteine 255 with cysteine 279. Histidine 281 serves as the catalytic Charge relay system. 3 cysteine pairs are disulfide-bonded: cysteine 303–cysteine 314, cysteine 317–cysteine 322, and cysteine 451–cysteine 467. Residues tryptophan 356–cysteine 467 form the PLAT domain.

This sequence belongs to the AB hydrolase superfamily. Lipase family. As to expression, expressed in female, but not in male, lacrimal gland. Expressed in male and female sublingual gland and pancreas.

Its subcellular location is the secreted. Its function is as follows. May function as inhibitor of dietary triglyceride digestion. Lacks detectable lipase activity (in vitro). The protein is Inactive pancreatic lipase-related protein 1 (Pnliprp1) of Mus musculus (Mouse).